The sequence spans 108 residues: Large ribosomal subunit protein eL30 (108 aa).

The protein belongs to the eukaryotic ribosomal protein eL30 family.

The protein is Large ribosomal subunit protein eL30 (rpl30e) of Saccharolobus solfataricus (strain ATCC 35092 / DSM 1617 / JCM 11322 / P2) (Sulfolobus solfataricus).